The sequence spans 541 residues: Centrosomal protein of 63 kDa (541 aa).

M1 bears the N-acetylmethionine mark. 2 coiled-coil regions span residues 22–199 and 242–305; these read EAEL…ESVE and MTVL…TQHA. S278 bears the Phosphoserine mark. A disordered region spans residues 294 to 324; the sequence is QEKVKATDTQHAVEAIRPREESPAEKKYTSQ. Over residues 307-321 the composition is skewed to basic and acidic residues; that stretch reads EAIRPREESPAEKKY. Coiled-coil stretches lie at residues 346 to 485 and 514 to 541; these read LQAE…KLEL and HILE…TALK.

This sequence belongs to the CEP63 family. In terms of assembly, interacts with CEP152 and CDK1; these interactions recruit both ligands to centrosomes. Interacts with CDK2, CDK5RAP2, WDR62, CEP90, KIAA0753/moonraker and CCDC14. CEP63, CDK5RAP2, CEP152, WDR62 are proposed to form a stepwise assembled complex at the centrosome forming a ring near parental centrioles. Interacts with CCDC57; the interaction is required for their location to proximal end of centrioles. Interacts with FXR1; promoting its stabilization. Polyubiquitinated via 'Lys-48'-linked ubiquitin, leading to its degradation. Deubiquitinated by USP36, promoting its stabilization.

It is found in the cytoplasm. The protein resides in the cytoskeleton. It localises to the microtubule organizing center. Its subcellular location is the centrosome. The protein localises to the centriole. It is found in the centriolar satellite. Required for normal spindle assembly. Plays a key role in mother-centriole-dependent centriole duplication; the function seems also to involve CEP152, CDK5RAP2 and WDR62 through a stepwise assembled complex at the centrosome that recruits CDK2 required for centriole duplication. Reported to be required for centrosomal recruitment of CEP152; however, this function has been questioned. Also recruits CDK1 to centrosomes. Plays a role in DNA damage response. Following DNA damage, such as double-strand breaks (DSBs), is removed from centrosomes; this leads to the inactivation of spindle assembly and delay in mitotic progression. Promotes stabilization of FXR1 protein by inhibiting FXR1 ubiquitination. This is Centrosomal protein of 63 kDa (CEP63) from Pongo abelii (Sumatran orangutan).